Consider the following 778-residue polypeptide: Receptor like protein 28 (778 aa).

An N-terminal signal peptide occupies residues 1–24; sequence MSGSHLRLRFLSLLLLCCVSSSTS. Over 25–739 the chain is Extracellular; it reads SLFTFSYPVL…EEQEQVLNWK (715 aa). N-linked (GlcNAc...) asparagine glycans are attached at residues asparagine 60, asparagine 72, asparagine 93, asparagine 106, asparagine 111, asparagine 147, asparagine 170, and asparagine 173. LRR repeat units lie at residues 99–123, 125–147, 148–171, 172–195, and 197–219; these read FHQL…EFGN, NKVE…SFSN, LSQL…VQNL, TNLS…LLMM, and FLSY…TSSK. The stretch at 220-240 is one LRR 6; degenerate repeat; it reads LEILYLGLKPFEGQILEPISK. 6 LRR repeats span residues 241–265, 266–291, 293–313, 314–338, 340–363, and 364–387; these read LINL…LFSS, LKSL…LYIP, TLEK…ILKT, LQKL…LWRL, RLRS…VLVN, and SSME…PLSI. Asparagine 253 carries N-linked (GlcNAc...) asparagine glycosylation. N-linked (GlcNAc...) asparagine glycosylation is found at asparagine 348 and asparagine 363. The stretch at 388 to 407 is one LRR 13; degenerate repeat; the sequence is KAFSAGYNNFSGEIPLSICN. Asparagine 396, asparagine 407, asparagine 420, asparagine 431, and asparagine 476 each carry an N-linked (GlcNAc...) asparagine glycan. 10 LRR repeats span residues 408-429, 430-453, 455-477, 479-500, 501-525, 528-552, 601-625, 626-649, 650-673, and 678-700; these read RSSL…PQCL, SNLT…LCAG, SLQT…LLNC, SLEF…WLKA, LPNL…HQSP, FPEL…YFVN, LNSY…IGLL, KELI…LANA, TELE…LKTL, and YINV…SSFE. N-linked (GlcNAc...) asparagine glycosylation is found at asparagine 632 and asparagine 648. The N-linked (GlcNAc...) asparagine glycan is linked to asparagine 680. The helical transmembrane segment at 740–760 threads the bilayer; it reads AVATGYGTGLLLGLAIAQVIA. Topologically, residues 761-778 are cytoplasmic; that stretch reads SYKPDWLVKIIGLFRFCF.

It belongs to the RLP family.

Its subcellular location is the cell membrane. The protein is Receptor like protein 28 of Arabidopsis thaliana (Mouse-ear cress).